A 175-amino-acid chain; its full sequence is Protein LHCP TRANSLOCATION DEFECT (175 aa).

Residues 1–68 constitute a chloroplast transit peptide; sequence MASSSISFSC…WFKFGKNGVD (68 aa). The stretch at 117 to 149 is one ANK repeat; that stretch reads PVDILLMLAATEGDRPKIEELLKAGADYSVKDA.

As to quaternary structure, interacts with CAO/cpSRP43, but is not a component of the transit complex. Interacts with LHCP (via T14 domain), TIC40 and TIC110. In terms of tissue distribution, highly expressed in leaves and seedlings. Detected in roots, but not in germinating seeds.

Its subcellular location is the plastid. It localises to the chloroplast thylakoid membrane. The protein localises to the chloroplast envelope. It is found in the chloroplast stroma. In terms of biological role, involved in the import of light-harvesting complex proteins (LHCP) and subsequent routing of these proteins to the chloroplast signal recognition particle (SRP) pathway. In Arabidopsis thaliana (Mouse-ear cress), this protein is Protein LHCP TRANSLOCATION DEFECT (LTD).